The chain runs to 404 residues: Cysteine desulfurase IscS (404 aa).

Residues 75–76 (AT), Asn155, Gln183, and 203–205 (SAH) contribute to the pyridoxal 5'-phosphate site. Lys206 is modified (N6-(pyridoxal phosphate)lysine). A pyridoxal 5'-phosphate-binding site is contributed by Thr243. The active-site Cysteine persulfide intermediate is Cys328. Cys328 serves as a coordination point for [2Fe-2S] cluster.

It belongs to the class-V pyridoxal-phosphate-dependent aminotransferase family. NifS/IscS subfamily. Homodimer. Forms a heterotetramer with IscU, interacts with other sulfur acceptors. It depends on pyridoxal 5'-phosphate as a cofactor.

The protein localises to the cytoplasm. It catalyses the reaction (sulfur carrier)-H + L-cysteine = (sulfur carrier)-SH + L-alanine. Its pathway is cofactor biosynthesis; iron-sulfur cluster biosynthesis. In terms of biological role, master enzyme that delivers sulfur to a number of partners involved in Fe-S cluster assembly, tRNA modification or cofactor biosynthesis. Catalyzes the removal of elemental sulfur atoms from cysteine to produce alanine. Functions as a sulfur delivery protein for Fe-S cluster synthesis onto IscU, an Fe-S scaffold assembly protein, as well as other S acceptor proteins. This Pseudomonas putida (strain ATCC 700007 / DSM 6899 / JCM 31910 / BCRC 17059 / LMG 24140 / F1) protein is Cysteine desulfurase IscS.